A 558-amino-acid chain; its full sequence is Oligo-1,6-glucosidase (558 aa).

Residues Asp21, Asn23, Asp25, and Asp29 each contribute to the Ca(2+) site. Asp199 acts as the Nucleophile in catalysis. Glu255 (proton donor) is an active-site residue.

It belongs to the glycosyl hydrolase 13 family.

The protein resides in the cytoplasm. The enzyme catalyses Hydrolysis of (1-&gt;6)-alpha-D-glucosidic linkages in some oligosaccharides produced from starch and glycogen by alpha-amylase, and in isomaltose.. In Bacillus cereus, this protein is Oligo-1,6-glucosidase (malL).